A 312-amino-acid polypeptide reads, in one-letter code: Magnesium protoporphyrin IX methyltransferase, chloroplastic (312 aa).

The N-terminal 39 residues, 1–39 (MPFAPSLLSSSSSVSQFLPRFPNATRFNVTPRSRAATVV), are a transit peptide targeting the chloroplast.

Belongs to the class I-like SAM-binding methyltransferase superfamily. Magnesium protoporphyrin O-methyltransferase family.

It localises to the plastid. The protein localises to the chloroplast membrane. It is found in the chloroplast thylakoid membrane. It carries out the reaction Mg-protoporphyrin IX + S-adenosyl-L-methionine = Mg-protoporphyrin IX 13-monomethyl ester + S-adenosyl-L-homocysteine. It participates in porphyrin-containing compound metabolism; chlorophyll biosynthesis. Regulated by the folate status via an increased concentration of S-adenosyl-homocysteine (AdoHcy), a potent inhibitor of most AdoMet-dependent methyltransferases. Functionally, converts Mg-protoporphyrin IX to Mg-protoporphyrin IX methylester using S-adenosyl-L-methionine as a cofactor. Involved in chloroplast-to-nucleus signaling by acting as a negative effector of nuclear photosynthetic gene expression. The sequence is that of Magnesium protoporphyrin IX methyltransferase, chloroplastic (CHLM) from Arabidopsis thaliana (Mouse-ear cress).